The primary structure comprises 505 residues: MAQVINTNSLSLLTQNNLNKSQSSLSSAIERLSSGLRINSAKDDAAGQAIANRFTSNIKGLTQASRNANDGISIAQTTEGALNEINNNLQRVRELSVQATNGTNSDSDLKSIQDEIQQRLEEIDRVSNQTQFNGVKVLSQDNQMKIQVGANDGETITIDLQKIDVKSLGLDGFNVNGPKEATVGDLKSSFKNVTGYDTYAAGADKYRVDINSGAVVTDAVAPDKVYVNAANGQLTTDDAENNTAVDLFKTTKSTAGTAEAKAIAGAIKGGKEGDTFDYKGVTFTIDTKTGDDGNGKVSTTINGEKVTLTVADIAIGAADVNAATLQSSKNVYTSVVNGQFTFDDKTKNESAKLSDLEANNAVKGESKITVNGAEYTANATGDKITLAGKTMFIDKTASGVSTLINEDAAAAKKSTANPLASIDSALSKVDAVRSSLGAIQNRFDSAITNLGNTVTNLNSARSRIEDADYATEVSNMSKAQILQQAGTSVLAQANQVPQNVLSLLR.

The protein belongs to the bacterial flagellin family.

The protein localises to the secreted. It localises to the bacterial flagellum. Its function is as follows. Flagellin is the subunit protein which polymerizes to form the filaments of bacterial flagella. The sequence is that of Flagellin (fliC) from Salmonella dublin.